A 225-amino-acid polypeptide reads, in one-letter code: Uracil-DNA glycosylase (225 aa).

Catalysis depends on Asp-64, which acts as the Proton acceptor.

Belongs to the uracil-DNA glycosylase (UDG) superfamily. UNG family.

The protein resides in the cytoplasm. The catalysed reaction is Hydrolyzes single-stranded DNA or mismatched double-stranded DNA and polynucleotides, releasing free uracil.. In terms of biological role, excises uracil residues from the DNA which can arise as a result of misincorporation of dUMP residues by DNA polymerase or due to deamination of cytosine. In Lachnoclostridium phytofermentans (strain ATCC 700394 / DSM 18823 / ISDg) (Clostridium phytofermentans), this protein is Uracil-DNA glycosylase.